The sequence spans 68 residues: Large ribosomal subunit protein bL31 (68 aa).

Positions 16, 18, 36, and 39 each coordinate Zn(2+).

The protein belongs to the bacterial ribosomal protein bL31 family. Type A subfamily. Part of the 50S ribosomal subunit. Zn(2+) is required as a cofactor.

In terms of biological role, binds the 23S rRNA. The chain is Large ribosomal subunit protein bL31 from Lachnospira eligens (strain ATCC 27750 / DSM 3376 / VPI C15-48 / C15-B4) (Eubacterium eligens).